Reading from the N-terminus, the 91-residue chain is Sm-like protein LSM36B (91 aa).

The Sm domain maps to 14 to 86 (TPADFLKSIR…VLYISTTKGT (73 aa)).

Belongs to the snRNP Sm proteins family. In terms of assembly, component of the heptameric LSM1-LSM7 complex that forms a seven-membered ring structure with a donut shape. The LSM subunits are arranged in the order LSM1, LSM2, LSM3, LSM6, LSM5, LSM7 and LSM4. Component of the heptameric LSM2-LSM8 complex that forms a seven-membered ring structure with a donut shape. The LSM subunits are arranged in the order LSM8, LSM2, LSM3, LSM6, LSM5, LSM7 and LSM4. LSM6B subunit interacts only with its two neighboring subunits, LSM3A or LSM3B and LSM5. As to expression, expressed in roots, leaves, stems, flowers and siliques.

The protein resides in the cytoplasm. It localises to the nucleus. Its function is as follows. Component of LSM protein complexes, which are involved in RNA processing. Component of the cytoplasmic LSM1-LSM7 complex which is involved in mRNA degradation by promoting decapping and leading to accurate 5'-3' mRNA decay. The cytoplasmic LSM1-LSM7 complex regulates developmental gene expression by the decapping of specific development-related transcripts. Component of the nuclear LSM2-LSM8 complex which is involved splicing nuclear mRNAs. LSM2-LSM8 binds directly to the U6 small nuclear RNAs (snRNAs) and is essential for accurate splicing of selected development-related mRNAs through the stabilization of the spliceosomal U6 snRNA. Plays a critical role in the regulation of development-related gene expression. The sequence is that of Sm-like protein LSM36B from Arabidopsis thaliana (Mouse-ear cress).